A 443-amino-acid polypeptide reads, in one-letter code: ATP-dependent protease ATPase subunit HslU (443 aa).

ATP is bound by residues Val-18, Gly-60–Glu-65, Asp-255, Glu-321, and Arg-393.

The protein belongs to the ClpX chaperone family. HslU subfamily. As to quaternary structure, a double ring-shaped homohexamer of HslV is capped on each side by a ring-shaped HslU homohexamer. The assembly of the HslU/HslV complex is dependent on binding of ATP.

Its subcellular location is the cytoplasm. In terms of biological role, ATPase subunit of a proteasome-like degradation complex; this subunit has chaperone activity. The binding of ATP and its subsequent hydrolysis by HslU are essential for unfolding of protein substrates subsequently hydrolyzed by HslV. HslU recognizes the N-terminal part of its protein substrates and unfolds these before they are guided to HslV for hydrolysis. This Colwellia psychrerythraea (strain 34H / ATCC BAA-681) (Vibrio psychroerythus) protein is ATP-dependent protease ATPase subunit HslU.